The primary structure comprises 177 residues: Large ribosomal subunit protein uL10 (177 aa).

This sequence belongs to the universal ribosomal protein uL10 family. As to quaternary structure, part of the ribosomal stalk of the 50S ribosomal subunit. The N-terminus interacts with L11 and the large rRNA to form the base of the stalk. The C-terminus forms an elongated spine to which L12 dimers bind in a sequential fashion forming a multimeric L10(L12)X complex.

Forms part of the ribosomal stalk, playing a central role in the interaction of the ribosome with GTP-bound translation factors. The polypeptide is Large ribosomal subunit protein uL10 (Xanthomonas campestris pv. campestris (strain 8004)).